Consider the following 195-residue polypeptide: Glycerol-3-phosphate acyltransferase (195 aa).

The next 5 helical transmembrane spans lie at 2-22 (LWIF…GLFI), 52-72 (YGVA…LMAY), 78-98 (WIFI…SIFM), 112-132 (VFLA…LAVI), and 145-165 (FAVA…VPLA).

Belongs to the PlsY family. Probably interacts with PlsX.

The protein resides in the cell inner membrane. The enzyme catalyses an acyl phosphate + sn-glycerol 3-phosphate = a 1-acyl-sn-glycero-3-phosphate + phosphate. The protein operates within lipid metabolism; phospholipid metabolism. Its function is as follows. Catalyzes the transfer of an acyl group from acyl-phosphate (acyl-PO(4)) to glycerol-3-phosphate (G3P) to form lysophosphatidic acid (LPA). This enzyme utilizes acyl-phosphate as fatty acyl donor, but not acyl-CoA or acyl-ACP. In Maridesulfovibrio salexigens (strain ATCC 14822 / DSM 2638 / NCIMB 8403 / VKM B-1763) (Desulfovibrio salexigens), this protein is Glycerol-3-phosphate acyltransferase.